The following is a 254-amino-acid chain: 5'-nucleotidase SurE (254 aa).

A divalent metal cation contacts are provided by D8, D9, S38, and N91.

It belongs to the SurE nucleotidase family. A divalent metal cation is required as a cofactor.

The protein resides in the cytoplasm. It catalyses the reaction a ribonucleoside 5'-phosphate + H2O = a ribonucleoside + phosphate. Nucleotidase that shows phosphatase activity on nucleoside 5'-monophosphates. In Anaeromyxobacter sp. (strain Fw109-5), this protein is 5'-nucleotidase SurE.